A 511-amino-acid polypeptide reads, in one-letter code: 2'-acyl-2-O-sulfo-trehalose (hydroxy)phthioceranyltransferase PapA1 (511 aa).

Belongs to the PapA acyltransferase family.

The enzyme catalyses a (hydroxy)phthioceranyl-[(hydroxy)phthioceranic acid synthase] + 2'-palmitoyl/stearoyl-2-O-sulfo-alpha,alpha-trehalose = a 3'-(hydroxy)phthioceranyl-2'-palmitoyl/stearoyl-2-O-sulfo-alpha,alpha-trehalose + holo-[(hydroxy)phthioceranic acid synthase].. Functionally, catalyzes the acylation of trehalose-2-sulfate-2'-palmitate (SL659) by adding the (hydroxy)phthioceranoyl group at the 3'-position to yield the diacylated intermediate 2-palmitoyl-3-(C43)-phthioceranyl-alpha, alpha'-D-trehalose-2'-sulfate (SL1278). The sequence is that of 2'-acyl-2-O-sulfo-trehalose (hydroxy)phthioceranyltransferase PapA1 (papA1) from Mycobacterium bovis (strain BCG / Pasteur 1173P2).